The chain runs to 116 residues: Large ribosomal subunit protein bL17 (116 aa).

This sequence belongs to the bacterial ribosomal protein bL17 family. As to quaternary structure, part of the 50S ribosomal subunit. Contacts protein L32.

This is Large ribosomal subunit protein bL17 from Synechococcus sp. (strain CC9311).